The following is a 2726-amino-acid chain: Filamin-C (2726 aa).

The segment at 1–260 is actin-binding; the sequence is MMNNSNYSDA…VMTYLSQFPK (260 aa). S5 is modified (phosphoserine). Calponin-homology (CH) domains are found at residues 37-143 and 160-263; these read KIQQ…LHYS and QTPK…KAKL. Filamin repeat units lie at residues 271 to 369, 371 to 469, 470 to 566, 567 to 659, 663 to 759, 760 to 862, 863 to 961, 962 to 1057, 1058 to 1150, 1151 to 1245, 1246 to 1345, 1346 to 1438, 1439 to 1534, 1535 to 1631, and 1636 to 1735; these read SKQL…EVNV, MALG…PVHV, AEAC…EVQV, SPEA…IAHI, PPDC…RVNV, GEGS…HIKV, DPSH…VVNV, APPL…AVEG, VLPP…KATI, QPVF…RVHV, QPAV…RVGV, TEGC…RVPV, KDVV…KIKV, LPAH…RIHA, and DASK…HVLA. The residue at position 1003 (R1003) is an Omega-N-methylarginine. Phosphoserine occurs at positions 1162 and 1339. Residues 1736-1759 form a hinge 1 region; that stretch reads CDPLPHVEEPAEVLQLHQPYAPLR. Filamin repeat units follow at residues 1760–1854, 1855–1947, 1948–2034, and 2037–2129; these read PGTC…LQFY, VDAI…TAKI, TGDD…KILV, and SEIG…TVKV. S2043 is subject to Phosphoserine. The tract at residues 2163 to 2244 is intradomain insert; mediate targeting to Z lines; it reads GNWFQMVSAQ…FGSITRQQEG (82 aa). Positions 2194-2210 are enriched in basic and acidic residues; sequence ISKTRGGETKREVRVEE. Residues 2194-2214 form a disordered region; the sequence is ISKTRGGETKREVRVEESTQV. Phosphoserine is present on residues S2234 and S2237. T2239 is subject to Phosphothreonine. Residues 2241–2260 are compositionally biased toward polar residues; the sequence is QQEGEASSQDMTAQVTSPSG. The segment at 2241–2261 is disordered; that stretch reads QQEGEASSQDMTAQVTSPSGK. The Filamin 20; mediates interaction with XIRP1 repeat unit spans residues 2245–2307; that stretch reads EASSQDMTAQ…VPGSPFQFTV (63 aa). 3 Filamin repeats span residues 2310–2402, 2404–2497, and 2501–2593; these read LGEG…VVPV, SLSD…KIRV, and SQAG…KAKV. The tract at residues 2404–2725 is interaction with INPPL1; sequence SLSDDARRLT…VPGSPFKVNV (322 aa). Phosphoserine occurs at positions 2587, 2618, 2621, 2633, 2715, and 2719. Positions 2594 to 2630 are hinge 2; sequence TGPRLSGGHSLHETSTVLVETVTKSSSSRGASYSSIP. A self-association site, tail region spans residues 2594 to 2726; the sequence is TGPRLSGGHS…PGSPFKVNVP (133 aa). The stretch at 2631–2725 is one Filamin 24 repeat; the sequence is KFSSDASKVV…VPGSPFKVNV (95 aa).

Belongs to the filamin family. As to quaternary structure, homodimer; the filamin repeat 24 and the second hinge domain are important for dimer formation. Interacts with FLNB, KCND2, INPPL1, ITGB1A, MYOT, MYOZ1 and MYOZ3. Interacts with sarcoglycans SGCD and SGCG. Interacts (via filament repeats 17-18, 20-21 and 24) with USP25 (isoform USP25m only). Interacts with FBLIM1. Interacts with KY. Interacts with IGFN1. Interacts with MICALL2. Interacts with XIRP1; this interaction is mediated by filamin 20 repeat. Interacts with ANK3. Interacts with SYNPO2. In terms of processing, ubiquitinated by FBXL22, leading to proteasomal degradation.

It is found in the cytoplasm. Its subcellular location is the membrane. The protein resides in the cytoskeleton. It localises to the myofibril. The protein localises to the sarcomere. It is found in the z line. Functionally, muscle-specific filamin, which plays a central role in sarcomere assembly and organization. Critical for normal myogenesis, it probably functions as a large actin-cross-linking protein with structural functions at the Z lines in muscle cells. May be involved in reorganizing the actin cytoskeleton in response to signaling events. This is Filamin-C (Flnc) from Rattus norvegicus (Rat).